The sequence spans 111 residues: MSYPIGAQPQGVQGYVTSNSSQWNSDVFDCCEDMGICLCGTFVPCILACKVSQDFGECCCLPCLFGSVLAVRTGIRERYHIEGSICNDWVCLSFCGQCTLCQMARELKARN.

It belongs to the cornifelin family.

The chain is Cornifelin homolog (cnfn) from Xenopus tropicalis (Western clawed frog).